Reading from the N-terminus, the 85-residue chain is Large ribosomal subunit protein bL27 (85 aa).

A disordered region spans residues 1 to 22 (MAHKKGGGSSRNGRDSNAQRRG).

It belongs to the bacterial ribosomal protein bL27 family.

The sequence is that of Large ribosomal subunit protein bL27 from Sorangium cellulosum (strain So ce56) (Polyangium cellulosum (strain So ce56)).